The chain runs to 159 residues: Ribosomal RNA large subunit methyltransferase H (159 aa).

S-adenosyl-L-methionine is bound by residues L76, G108, and F127 to L132.

This sequence belongs to the RNA methyltransferase RlmH family. In terms of assembly, homodimer.

The protein localises to the cytoplasm. The enzyme catalyses pseudouridine(1915) in 23S rRNA + S-adenosyl-L-methionine = N(3)-methylpseudouridine(1915) in 23S rRNA + S-adenosyl-L-homocysteine + H(+). In terms of biological role, specifically methylates the pseudouridine at position 1915 (m3Psi1915) in 23S rRNA. This is Ribosomal RNA large subunit methyltransferase H from Lactococcus lactis subsp. cremoris (strain SK11).